A 1245-amino-acid polypeptide reads, in one-letter code: ATP-dependent helicase/nuclease subunit A (1245 aa).

The region spanning 4–477 (TKWTDEQLSA…IQLYKNFRSR (474 aa)) is the UvrD-like helicase ATP-binding domain. Position 25-32 (25-32 (AAAGSGKT)) interacts with ATP. One can recognise a UvrD-like helicase C-terminal domain in the interval 517-815 (KFKDTIVGGP…RIMSIHKSKG (299 aa)).

Belongs to the helicase family. AddA subfamily. In terms of assembly, heterodimer of AddA and AddB/RexB. It depends on Mg(2+) as a cofactor.

It carries out the reaction Couples ATP hydrolysis with the unwinding of duplex DNA by translocating in the 3'-5' direction.. It catalyses the reaction ATP + H2O = ADP + phosphate + H(+). Functionally, the heterodimer acts as both an ATP-dependent DNA helicase and an ATP-dependent, dual-direction single-stranded exonuclease. Recognizes the chi site generating a DNA molecule suitable for the initiation of homologous recombination. The AddA nuclease domain is required for chi fragment generation; this subunit has the helicase and 3' -&gt; 5' nuclease activities. The protein is ATP-dependent helicase/nuclease subunit A of Clostridium beijerinckii (strain ATCC 51743 / NCIMB 8052) (Clostridium acetobutylicum).